We begin with the raw amino-acid sequence, 451 residues long: Exodeoxyribonuclease 7 large subunit (451 aa).

Belongs to the XseA family. In terms of assembly, heterooligomer composed of large and small subunits.

The protein localises to the cytoplasm. It catalyses the reaction Exonucleolytic cleavage in either 5'- to 3'- or 3'- to 5'-direction to yield nucleoside 5'-phosphates.. In terms of biological role, bidirectionally degrades single-stranded DNA into large acid-insoluble oligonucleotides, which are then degraded further into small acid-soluble oligonucleotides. The sequence is that of Exodeoxyribonuclease 7 large subunit from Neisseria meningitidis serogroup C / serotype 2a (strain ATCC 700532 / DSM 15464 / FAM18).